A 462-amino-acid chain; its full sequence is Glutamate--tRNA ligase 2 (462 aa).

Residues 8-18 (PSPTGYLHIGG) carry the 'HIGH' region motif. The short motif at 236-240 (KLSKR) is the 'KMSKS' region element. Lys-239 contacts ATP.

The protein belongs to the class-I aminoacyl-tRNA synthetase family. Glutamate--tRNA ligase type 1 subfamily. In terms of assembly, monomer.

It localises to the cytoplasm. It carries out the reaction tRNA(Glu) + L-glutamate + ATP = L-glutamyl-tRNA(Glu) + AMP + diphosphate. Functionally, catalyzes the attachment of glutamate to tRNA(Glu) in a two-step reaction: glutamate is first activated by ATP to form Glu-AMP and then transferred to the acceptor end of tRNA(Glu). The chain is Glutamate--tRNA ligase 2 from Nitratiruptor sp. (strain SB155-2).